A 684-amino-acid polypeptide reads, in one-letter code: Pseudohemocyanin-1 (684 aa).

Residues 1–23 form the signal peptide; it reads SLVVAAAAASPYSGSHDFSGFQR. The disordered stretch occupies residues 7 to 32; that stretch reads AAASPYSGSHDFSGFQRDEPDGVPTA. N-linked (GlcNAc...) asparagine glycosylation is found at N100, N193, N230, and N626.

Belongs to the tyrosinase family. Hemocyanin subfamily. In terms of assembly, hexamer. In terms of tissue distribution, strongly expressed in ovaries. Also expressed in heart. Not detected in hepatopancreas, gills, connective tissue or muscle.

Does not function as a hemocyanin. This Homarus americanus (American lobster) protein is Pseudohemocyanin-1.